The primary structure comprises 1120 residues: Terminal uridylyltransferase 1 (1120 aa).

Disordered regions lie at residues methionine 1–glutamate 156 and alanine 196–proline 221. The span at leucine 7–threonine 16 shows a compositional bias: polar residues. The segment covering asparagine 17–serine 59 has biased composition (low complexity). The span at proline 60–glycine 70 shows a compositional bias: basic residues. Basic and acidic residues predominate over residues asparagine 90–histidine 103. A compositionally biased stretch (polar residues) spans leucine 118–serine 128. Composition is skewed to low complexity over residues alanine 134 to alanine 154 and serine 207 to serine 217. The C2H2-type; atypical zinc-finger motif lies at proline 222–leucine 253. 4 residues coordinate Zn(2+): cysteine 227, cysteine 230, histidine 244, and histidine 249. UTP is bound by residues serine 330 and serine 341–aspartate 344. Positions 342 and 344 each coordinate Mg(2+). RNA is bound at residue arginine 390. Position 548 (aspartate 548) interacts with Mg(2+). Residues glycine 555 to serine 559, lysine 580, lysine 584, and serine 598 to tyrosine 599 each bind UTP. The PAP-associated domain occupies glycine 659–valine 697. The important for catalytic activity and RNA binding stretch occupies residues glycine 750 to arginine 1120. Positions isoleucine 773–asparagine 782 match the Nucleotide recognition motif (NRM) motif. Positions tyrosine 800–leucine 900 are involved in oligomerization. A disordered region spans residues proline 1047–proline 1076.

It belongs to the DNA polymerase type-B-like family. As to quaternary structure, homotetramer. Part of a 700kDa complex. Interacts with p45 and p50 RNA ligases. Requires Mg(2+) as cofactor. Mn(2+) serves as cofactor.

It is found in the mitochondrion. It carries out the reaction RNA(n) + UTP = RNA(n)-3'-uridine ribonucleotide + diphosphate. With respect to regulation, zinc-binding is required for catalytic activity. In terms of biological role, terminal uridylyltransferase which is involved in the post-transcriptional editing of mitochondrial RNA, a process involving the addition and deletion of uridine (U) nucleotides in the pre-mRNA. Specifically, catalyzes the addition of Us to the 3'-hydroxyl group of guided RNA (gRNA), with a preference for RNAs terminating in 6 Us, but also can add Us to RNAs terminating in 6 adenines (A), 6 cytosines (C), or 6 guanines (G). Can mediate RNA-independent UTP polymerization in vitro. Can mediate pyrophosphate-dependent degradation of synthetic RNA ending with U residues in vitro. The chain is Terminal uridylyltransferase 1 from Leishmania tarentolae (Sauroleishmania tarentolae).